We begin with the raw amino-acid sequence, 249 residues long: Phosphate import ATP-binding protein PstB 2 (249 aa).

One can recognise an ABC transporter domain in the interval 4 to 244; sequence IEVRDLDLFY…PKDKRTEDYI (241 aa). 36–43 contributes to the ATP binding site; it reads GPSGCGKS.

This sequence belongs to the ABC transporter superfamily. Phosphate importer (TC 3.A.1.7) family. The complex is composed of two ATP-binding proteins (PstB), two transmembrane proteins (PstC and PstA) and a solute-binding protein (PstS).

The protein localises to the cell membrane. It carries out the reaction phosphate(out) + ATP + H2O = ADP + 2 phosphate(in) + H(+). Functionally, part of the ABC transporter complex PstSACB involved in phosphate import. Responsible for energy coupling to the transport system. The sequence is that of Phosphate import ATP-binding protein PstB 2 from Caldanaerobacter subterraneus subsp. tengcongensis (strain DSM 15242 / JCM 11007 / NBRC 100824 / MB4) (Thermoanaerobacter tengcongensis).